The primary structure comprises 281 residues: Secretory carrier-associated membrane protein 5 (281 aa).

The tract at residues 1-49 (MHHDPNPFDEGADDNPFSNGGGGGARRGGGGGGGGGGGGGKSQFSFGFG) is disordered. The Cytoplasmic segment spans residues 1-139 (MHHDPNPFDE…AQKLQYLAFA (139 aa)). Residues 19-49 (NGGGGGARRGGGGGGGGGGGGGKSQFSFGFG) are compositionally biased toward gly residues. Positions 76-102 (KELLQWEADLKRREADIRRREEALKSA) form a coiled coil. 4 helical membrane-spanning segments follow: residues 140–160 (SWLGIVLCLFWNFIAVIVCWI), 167–187 (LFFLATIYGMLGMPLSYLMWY), 202–222 (FGWFFLCYMLHIAFCVFAAIA), and 250–270 (IFYFVGFALFCLETLVSIWVL). The Cytoplasmic portion of the chain corresponds to 271 to 281 (QKVYMYFRGHK).

Belongs to the SCAMP family.

The protein localises to the cell membrane. The protein resides in the cytoplasmic vesicle. It localises to the secretory vesicle membrane. In terms of biological role, probably involved in membrane trafficking. This Oryza sativa subsp. japonica (Rice) protein is Secretory carrier-associated membrane protein 5 (SCAMP5).